The chain runs to 462 residues: Kinetochore protein Nuf2-A (462 aa).

Coiled-coil stretches lie at residues S143–D277 and E308–R461. The tract at residues R239–K259 is disordered. A compositionally biased stretch (basic and acidic residues) spans P248–K259.

This sequence belongs to the NUF2 family. In terms of assembly, component of the NDC80 complex, which is composed of ndc80, cdca1, spbc24 and spbc25. The NDC80 complex interacts with mis12 and zwint.

Its subcellular location is the nucleus. It is found in the chromosome. The protein resides in the centromere. The protein localises to the kinetochore. Functionally, acts as a component of the essential kinetochore-associated NDC80 complex, which is required for chromosome segregation and spindle checkpoint activity. Required for kinetochore integrity and the organization of stable microtubule binding sites in the outer plate of the kinetochore. The NDC80 complex synergistically enhances the affinity of the SKA1 complex for microtubules and may allow the NDC80 complex to track depolymerizing microtubules. The protein is Kinetochore protein Nuf2-A (nuf2-a) of Xenopus laevis (African clawed frog).